We begin with the raw amino-acid sequence, 246 residues long: MADS-box transcription factor 14 (246 aa).

An MADS-box domain is found at 1-61 (MGRGKVQLKR…GKLYEYATDS (61 aa)). One can recognise a K-box domain in the interval 88–178 (QGNWCHEYRK…QKELVEKQKV (91 aa)). The segment at 180–199 (KQQVQWDQTQPQTSSSSSSF) is disordered.

May interact with the K-box of MADS1 and MADS6. In terms of tissue distribution, highly expressed in sterile lemmas, at intermediate levels in stamens, and weakly in lemmas, paleas and carpels.

Its subcellular location is the nucleus. Its function is as follows. Probable transcription factor. May be involved in the control of flowering time. The protein is MADS-box transcription factor 14 (MADS14) of Oryza sativa subsp. japonica (Rice).